The sequence spans 466 residues: Trigger factor (466 aa).

A PPIase FKBP-type domain is found at 162–243; sequence GDVVSIDLSA…VRSVKERELP (82 aa). The segment at 428–466 is disordered; sequence GNTIDTSEFFGKRVSAGEAEEAEPADEGAARAASDEATT. Over residues 457-466 the composition is skewed to low complexity; the sequence is ARAASDEATT.

It belongs to the FKBP-type PPIase family. Tig subfamily.

The protein resides in the cytoplasm. It catalyses the reaction [protein]-peptidylproline (omega=180) = [protein]-peptidylproline (omega=0). Its function is as follows. Involved in protein export. Acts as a chaperone by maintaining the newly synthesized protein in an open conformation. Functions as a peptidyl-prolyl cis-trans isomerase. This Mycobacterium bovis (strain BCG / Tokyo 172 / ATCC 35737 / TMC 1019) protein is Trigger factor.